The chain runs to 156 residues: Arginine repressor (156 aa).

It belongs to the ArgR family.

It localises to the cytoplasm. The protein operates within amino-acid biosynthesis; L-arginine biosynthesis [regulation]. Functionally, regulates arginine biosynthesis genes. The protein is Arginine repressor of Erwinia tasmaniensis (strain DSM 17950 / CFBP 7177 / CIP 109463 / NCPPB 4357 / Et1/99).